Here is a 341-residue protein sequence, read N- to C-terminus: Cyanuric acid amidohydrolase (341 aa).

The RU A stretch occupies residues 1 to 90 (MAPIEILKFP…HVTFFLRSPG (90 aa)). Residues Arg-51 and 71–72 (SG) contribute to the substrate site. The tract at residues 95 to 229 (GLSAAVGHTR…CHILVLASTS (135 aa)) is RU B. Residue Lys-144 is part of the active site. Residues Arg-176 and 212 to 213 (SS) each bind substrate. Ser-212 acts as the Nucleophile in catalysis. Positions 235-341 (LHAVSRPMAD…SLCLVYETSI (107 aa)) are RU C. Residue Glu-273 coordinates Mg(2+). Substrate contacts are provided by residues Arg-300 and 319 to 320 (SG). Mg(2+) contacts are provided by Ala-322, Gln-325, Gly-326, Pro-327, and Gly-330.

This sequence belongs to the cyclic amide hydrolase (CyAH) family. Homotetramer.

The catalysed reaction is cyanurate + H2O = 1-carboxybiuret + H(+). It participates in xenobiotic degradation; atrazine degradation; biuret from cyanurate: step 1/1. Its activity is regulated as follows. Inhibited by barbituric acid. Functionally, responsible for the hydrolysis of cyanuric acid, an intermediate formed during catabolism of s-triazine based compounds in herbicides such as atrazine and polymers such as melamine. Catalyzes the hydrolytic opening of the s-triazine ring of cyanuric acid (2,4,6-trihydroxy-s-triazine) to yield carbon dioxide and carboxybiuret, which spontaneously decarboxylates to biuret. Only active on cyanuric acid and N-methylisocyanuric acid. The chain is Cyanuric acid amidohydrolase from Sarocladium sp.